The sequence spans 98 residues: Sec-independent protein translocase protein TatA (98 aa).

A helical transmembrane segment spans residues 1 to 21 (MGAMSPWHWAIVALVVVILFG). The interval 43–98 (VKEMQNDNSTPAPTAQSAPPPQSAPAELPVADTTTAPVTPPAPVQPQSQHTEPKSA) is disordered. A compositionally biased stretch (low complexity) spans 66-79 (APAELPVADTTTAP).

It belongs to the TatA/E family. As to quaternary structure, the Tat system comprises two distinct complexes: a TatABC complex, containing multiple copies of TatA, TatB and TatC subunits, and a separate TatA complex, containing only TatA subunits. Substrates initially bind to the TatABC complex, which probably triggers association of the separate TatA complex to form the active translocon.

Its subcellular location is the cell membrane. Its function is as follows. Part of the twin-arginine translocation (Tat) system that transports large folded proteins containing a characteristic twin-arginine motif in their signal peptide across membranes. TatA could form the protein-conducting channel of the Tat system. The sequence is that of Sec-independent protein translocase protein TatA from Rhodococcus erythropolis (Arthrobacter picolinophilus).